The sequence spans 41 residues: Photosystem II reaction center protein L (41 aa).

Residues 20–40 (SLYLGLLLVFVVGLLFSSYFL) form a helical membrane-spanning segment.

This sequence belongs to the PsbL family. As to quaternary structure, PSII is composed of 1 copy each of membrane proteins PsbA, PsbB, PsbC, PsbD, PsbE, PsbF, PsbH, PsbI, PsbJ, PsbK, PsbL, PsbM, PsbT, PsbX, PsbY, PsbZ, Psb30/Ycf12, peripheral proteins PsbO, CyanoQ (PsbQ), PsbU, PsbV and a large number of cofactors. It forms dimeric complexes.

Its subcellular location is the cellular thylakoid membrane. Functionally, one of the components of the core complex of photosystem II (PSII). PSII is a light-driven water:plastoquinone oxidoreductase that uses light energy to abstract electrons from H(2)O, generating O(2) and a proton gradient subsequently used for ATP formation. It consists of a core antenna complex that captures photons, and an electron transfer chain that converts photonic excitation into a charge separation. This subunit is found at the monomer-monomer interface and is required for correct PSII assembly and/or dimerization. This is Photosystem II reaction center protein L from Synechococcus sp. (strain JA-2-3B'a(2-13)) (Cyanobacteria bacterium Yellowstone B-Prime).